We begin with the raw amino-acid sequence, 937 residues long: ABC transporter A family member 4 (937 aa).

7 helical membrane-spanning segments follow: residues 34 to 54 (LIVI…LFDT), 340 to 360 (IASV…FPVI), 394 to 414 (FLAI…AIGL), 423 to 443 (SIQF…AFLV), 455 to 475 (VAAY…FQFM), 478 to 498 (GLSF…FSLY), and 528 to 548 (AMDE…IAAY). The ABC transporter domain occupies 618–852 (DKLKKVYPGR…YGGSYVLTMT (235 aa)). 653 to 660 (GPNGAGKT) lines the ATP pocket.

Belongs to the ABC transporter superfamily. ABCA family. CPR flippase (TC 3.A.1.211) subfamily.

The protein resides in the membrane. This is ABC transporter A family member 4 (ABCA4) from Arabidopsis thaliana (Mouse-ear cress).